Reading from the N-terminus, the 415-residue chain is Histidine--tRNA ligase (415 aa).

This sequence belongs to the class-II aminoacyl-tRNA synthetase family. As to quaternary structure, homodimer.

It is found in the cytoplasm. The catalysed reaction is tRNA(His) + L-histidine + ATP = L-histidyl-tRNA(His) + AMP + diphosphate + H(+). The polypeptide is Histidine--tRNA ligase (Clostridium botulinum (strain Loch Maree / Type A3)).